Here is a 119-residue protein sequence, read N- to C-terminus: Ribosome-binding factor A (119 aa).

This sequence belongs to the RbfA family. As to quaternary structure, monomer. Binds 30S ribosomal subunits, but not 50S ribosomal subunits or 70S ribosomes.

Its subcellular location is the cytoplasm. Functionally, one of several proteins that assist in the late maturation steps of the functional core of the 30S ribosomal subunit. Associates with free 30S ribosomal subunits (but not with 30S subunits that are part of 70S ribosomes or polysomes). Required for efficient processing of 16S rRNA. May interact with the 5'-terminal helix region of 16S rRNA. The sequence is that of Ribosome-binding factor A from Chlorobium phaeovibrioides (strain DSM 265 / 1930) (Prosthecochloris vibrioformis (strain DSM 265)).